Consider the following 256-residue polypeptide: Small ribosomal subunit protein uS2 (256 aa).

This sequence belongs to the universal ribosomal protein uS2 family.

This Ruegeria sp. (strain TM1040) (Silicibacter sp.) protein is Small ribosomal subunit protein uS2.